The primary structure comprises 967 residues: Probable disease resistance protein At1g61190 (967 aa).

A coiled-coil region spans residues 20–68 (RCLCGKGYIRNLEKNLRALQREMEDLRATQHEVQNKVAREESRHQQRLE). The disordered stretch occupies residues 132–153 (GNFDEVSQPPPRSEVEERPTQP). Residues 138–441 (SQPPPRSEVE…CEGFIGEDQV (304 aa)) form the NB-ARC domain. Position 180 to 187 (180 to 187 (GMGGVGKT)) interacts with ATP. LRR repeat units lie at residues 516 to 537 (AVRR…SKCS), 538 to 559 (ELTT…FIRY), 562 to 585 (KLVV…SGLV), 586 to 608 (SLQY…KELK), and 609 to 631 (KLIF…SRLL).

The protein belongs to the disease resistance NB-LRR family.

Its function is as follows. Probable disease resistance protein. This is Probable disease resistance protein At1g61190 from Arabidopsis thaliana (Mouse-ear cress).